Consider the following 246-residue polypeptide: uncharacterized protein (246 aa).

2 stretches are compositionally biased toward basic residues: residues 1-10 and 79-97; these read MVWRFQKHIG and TRRR…KAGR. The segment at 1 to 184 is disordered; the sequence is MVWRFQKHIG…LPPAHVPPTL (184 aa). The span at 158-180 shows a compositional bias: pro residues; it reads PPFPPPPPPGDPTPPSPLPPAHV.

This is an uncharacterized protein from Homo sapiens (Human).